Reading from the N-terminus, the 375-residue chain is Methylthioribose-1-phosphate isomerase (375 aa).

D257 (proton donor) is an active-site residue.

Belongs to the eIF-2B alpha/beta/delta subunits family. MtnA subfamily.

The protein resides in the cytoplasm. It localises to the nucleus. It catalyses the reaction 5-(methylsulfanyl)-alpha-D-ribose 1-phosphate = 5-(methylsulfanyl)-D-ribulose 1-phosphate. The protein operates within amino-acid biosynthesis; L-methionine biosynthesis via salvage pathway; L-methionine from S-methyl-5-thio-alpha-D-ribose 1-phosphate: step 1/6. Its function is as follows. Catalyzes the interconversion of methylthioribose-1-phosphate (MTR-1-P) into methylthioribulose-1-phosphate (MTRu-1-P). The chain is Methylthioribose-1-phosphate isomerase from Leishmania major.